A 133-amino-acid chain; its full sequence is Fatty acid-binding protein, heart (133 aa).

Ala-2 is modified (N-acetylalanine). Thr-8 bears the Phosphothreonine mark. Phosphotyrosine; by Tyr-kinases is present on Tyr-20. At Ser-23 the chain carries Phosphoserine. A Phosphothreonine modification is found at Thr-30. Phosphoserine is present on Ser-83. Arg-127–Tyr-129 provides a ligand contact to (9Z)-octadecenoate. Hexadecanoate is bound at residue Arg-127 to Tyr-129. Arg-127–Tyr-129 contacts octadecanoate.

It belongs to the calycin superfamily. Fatty-acid binding protein (FABP) family.

It is found in the cytoplasm. In terms of biological role, FABPs are thought to play a role in the intracellular transport of long-chain fatty acids and their acyl-CoA esters. FABPs are important elements related to the hibernating state in mammals. This chain is Fatty acid-binding protein, heart (FABP3), found in Myotis lucifugus (Little brown bat).